The chain runs to 194 residues: Imidazoleglycerol-phosphate dehydratase (194 aa).

Belongs to the imidazoleglycerol-phosphate dehydratase family.

It localises to the cytoplasm. The catalysed reaction is D-erythro-1-(imidazol-4-yl)glycerol 3-phosphate = 3-(imidazol-4-yl)-2-oxopropyl phosphate + H2O. It participates in amino-acid biosynthesis; L-histidine biosynthesis; L-histidine from 5-phospho-alpha-D-ribose 1-diphosphate: step 6/9. This chain is Imidazoleglycerol-phosphate dehydratase, found in Oceanobacillus iheyensis (strain DSM 14371 / CIP 107618 / JCM 11309 / KCTC 3954 / HTE831).